The following is a 73-amino-acid chain: UPF0346 protein LVIS_0790 (73 aa).

Belongs to the UPF0346 family.

The protein is UPF0346 protein LVIS_0790 of Levilactobacillus brevis (strain ATCC 367 / BCRC 12310 / CIP 105137 / JCM 1170 / LMG 11437 / NCIMB 947 / NCTC 947) (Lactobacillus brevis).